Reading from the N-terminus, the 232-residue chain is 7-cyano-7-deazaguanine synthase (232 aa).

An ATP-binding site is contributed by 8–18 (FSGGQDSTTCL). Residues Cys-187, Cys-196, Cys-199, and Cys-202 each coordinate Zn(2+).

It belongs to the QueC family. Zn(2+) is required as a cofactor.

The catalysed reaction is 7-carboxy-7-deazaguanine + NH4(+) + ATP = 7-cyano-7-deazaguanine + ADP + phosphate + H2O + H(+). It functions in the pathway purine metabolism; 7-cyano-7-deazaguanine biosynthesis. Its function is as follows. Catalyzes the ATP-dependent conversion of 7-carboxy-7-deazaguanine (CDG) to 7-cyano-7-deazaguanine (preQ(0)). This chain is 7-cyano-7-deazaguanine synthase, found in Vibrio campbellii (strain ATCC BAA-1116).